Reading from the N-terminus, the 336-residue chain is Fructose-1,6-bisphosphatase class 1 (336 aa).

Residues glutamate 90, aspartate 112, leucine 114, and aspartate 115 each coordinate Mg(2+). Substrate-binding positions include 115–118, asparagine 211, and lysine 277; that span reads DGSS. Glutamate 283 provides a ligand contact to Mg(2+).

Belongs to the FBPase class 1 family. Homotetramer. Mg(2+) is required as a cofactor.

Its subcellular location is the cytoplasm. The enzyme catalyses beta-D-fructose 1,6-bisphosphate + H2O = beta-D-fructose 6-phosphate + phosphate. It functions in the pathway carbohydrate biosynthesis; gluconeogenesis. The chain is Fructose-1,6-bisphosphatase class 1 from Pseudomonas putida (strain W619).